Reading from the N-terminus, the 284-residue chain is Bifunctional protein FolD (284 aa).

NADP(+) is bound by residues 166-168 (GAS) and Ile-232.

The protein belongs to the tetrahydrofolate dehydrogenase/cyclohydrolase family. In terms of assembly, homodimer.

The catalysed reaction is (6R)-5,10-methylene-5,6,7,8-tetrahydrofolate + NADP(+) = (6R)-5,10-methenyltetrahydrofolate + NADPH. It carries out the reaction (6R)-5,10-methenyltetrahydrofolate + H2O = (6R)-10-formyltetrahydrofolate + H(+). Its pathway is one-carbon metabolism; tetrahydrofolate interconversion. In terms of biological role, catalyzes the oxidation of 5,10-methylenetetrahydrofolate to 5,10-methenyltetrahydrofolate and then the hydrolysis of 5,10-methenyltetrahydrofolate to 10-formyltetrahydrofolate. This chain is Bifunctional protein FolD, found in Shewanella baltica (strain OS195).